We begin with the raw amino-acid sequence, 103 residues long: Protein Rev (103 aa).

Residue S5 is modified to Phosphoserine; by host CK2. The interval 17–25 (IIKILYQSN) is homomultimerization. 2 disordered regions span residues 24 to 49 (SNPC…RRQA) and 82 to 103 (IRDP…TKDN). A Nuclear localization signal and RNA-binding (RRE) motif is present at residues 33-49 (SRNARKNRRRRWRRRQA). Positions 35–48 (NARKNRRRRWRRRQ) are enriched in basic residues. Positions 72–83 (VDLPPLEQLNIR) match the Nuclear export signal and binding to XPO1 motif.

Belongs to the HIV-1 REV protein family. In terms of assembly, homomultimer; when bound to the RRE. Multimeric assembly is essential for activity and may involve XPO1. Binds to human KPNB1, XPO1, TNPO1, RANBP5 and IPO7. Interacts with the viral Integrase. Interacts with human KHDRBS1. Interacts with human NAP1; this interaction decreases Rev multimerization and stimulates its activity. Interacts with human DEAD-box helicases DDX3 and DDX24; these interactions may serve for viral RNA export to the cytoplasm and packaging, respectively. Interacts with human PSIP1; this interaction may inhibit HIV-1 DNA integration by promoting dissociation of the Integrase-LEDGF/p75 complex. Asymmetrically arginine dimethylated at one site by host PRMT6. Methylation impairs the RNA-binding activity and export of viral RNA from the nucleus to the cytoplasm. Post-translationally, phosphorylated by protein kinase CK2. Presence of, and maybe binding to the N-terminus of the regulatory beta subunit of CK2 is necessary for CK2-mediated Rev's phosphorylation.

It is found in the host nucleus. The protein resides in the host nucleolus. Its subcellular location is the host cytoplasm. Escorts unspliced or incompletely spliced viral pre-mRNAs (late transcripts) out of the nucleus of infected cells. These pre-mRNAs carry a recognition sequence called Rev responsive element (RRE) located in the env gene, that is not present in fully spliced viral mRNAs (early transcripts). This function is essential since most viral proteins are translated from unspliced or partially spliced pre-mRNAs which cannot exit the nucleus by the pathway used by fully processed cellular mRNAs. Rev itself is translated from a fully spliced mRNA that readily exits the nucleus. Rev's nuclear localization signal (NLS) binds directly to KPNB1/Importin beta-1 without previous binding to KPNA1/Importin alpha-1. KPNB1 binds to the GDP bound form of RAN (Ran-GDP) and targets Rev to the nucleus. In the nucleus, the conversion from Ran-GDP to Ran-GTP dissociates Rev from KPNB1 and allows Rev's binding to the RRE in viral pre-mRNAs. Rev multimerization on the RRE via cooperative assembly exposes its nuclear export signal (NES) to the surface. Rev can then form a complex with XPO1/CRM1 and Ran-GTP, leading to nuclear export of the complex. Conversion from Ran-GTP to Ran-GDP mediates dissociation of the Rev/RRE/XPO1/RAN complex, so that Rev can return to the nucleus for a subsequent round of export. Beside KPNB1, also seems to interact with TNPO1/Transportin-1, RANBP5/IPO5 and IPO7/RANBP7 for nuclear import. The nucleoporin-like HRB/RIP is an essential cofactor that probably indirectly interacts with Rev to release HIV RNAs from the perinuclear region to the cytoplasm. This chain is Protein Rev, found in Human immunodeficiency virus type 1 group O (isolate MVP5180) (HIV-1).